A 265-amino-acid polypeptide reads, in one-letter code: 4-hydroxy-tetrahydrodipicolinate reductase (265 aa).

Residue 9–14 (GPRGRM) coordinates NAD(+). Arg37 provides a ligand contact to NADP(+). Residues 98–100 (GTT) and 124–127 (APNF) contribute to the NAD(+) site. Residue His154 is the Proton donor/acceptor of the active site. His155 provides a ligand contact to (S)-2,3,4,5-tetrahydrodipicolinate. Lys158 acts as the Proton donor in catalysis. 164 to 165 (GT) serves as a coordination point for (S)-2,3,4,5-tetrahydrodipicolinate.

Belongs to the DapB family.

It localises to the cytoplasm. It carries out the reaction (S)-2,3,4,5-tetrahydrodipicolinate + NAD(+) + H2O = (2S,4S)-4-hydroxy-2,3,4,5-tetrahydrodipicolinate + NADH + H(+). It catalyses the reaction (S)-2,3,4,5-tetrahydrodipicolinate + NADP(+) + H2O = (2S,4S)-4-hydroxy-2,3,4,5-tetrahydrodipicolinate + NADPH + H(+). Its pathway is amino-acid biosynthesis; L-lysine biosynthesis via DAP pathway; (S)-tetrahydrodipicolinate from L-aspartate: step 4/4. In terms of biological role, catalyzes the conversion of 4-hydroxy-tetrahydrodipicolinate (HTPA) to tetrahydrodipicolinate. The chain is 4-hydroxy-tetrahydrodipicolinate reductase from Geobacillus thermodenitrificans (strain NG80-2).